Consider the following 161-residue polypeptide: Abscisic acid receptor PYL11 (161 aa).

Residues 3–154 are START-like; it reads TSQKYHTCGS…NLKSLAKLSE (152 aa). Residues K39, 68-73, 95-101, and E119 each bind abscisate; these read AEFSRE and RLVNYRS. The Gate loop motif lies at 64 to 68; sequence SGLPA. A Latch loop motif is present at residues 94-96; sequence HRL.

Belongs to the PYR/PYL/RCAR abscisic acid intracellular receptor family. Homodimer. Binds ABA on one subunit only. Interacts with PP2Cs. Binds to CARs protein in an ABA-independent manner, both at the plasma membrane and in the nucleus. Interacts with I-2 and TOPP1.

The protein localises to the cytoplasm. The protein resides in the nucleus. It is found in the cell membrane. Its function is as follows. Receptor for abscisic acid (ABA) required for ABA-mediated responses such as stomatal closure and germination inhibition. Inhibits the activity of group-A protein phosphatases type 2C (PP2Cs) when activated by ABA. Suppresses the phosphatase activity of TOPP1 in a dose-dependent manner in vitro. This is Abscisic acid receptor PYL11 (PYL11) from Arabidopsis thaliana (Mouse-ear cress).